The sequence spans 444 residues: UDP-N-acetylmuramate--L-alanine ligase (444 aa).

Residue glycine 110–serine 116 participates in ATP binding.

The protein belongs to the MurCDEF family. In terms of processing, phosphorylated by StkP in vitro. Dephosphorylated by PhpP in vitro.

The protein resides in the cytoplasm. The enzyme catalyses UDP-N-acetyl-alpha-D-muramate + L-alanine + ATP = UDP-N-acetyl-alpha-D-muramoyl-L-alanine + ADP + phosphate + H(+). It functions in the pathway cell wall biogenesis; peptidoglycan biosynthesis. In terms of biological role, cell wall formation. The sequence is that of UDP-N-acetylmuramate--L-alanine ligase from Streptococcus pneumoniae serotype 4 (strain ATCC BAA-334 / TIGR4).